Reading from the N-terminus, the 305-residue chain is Oxygen-dependent coproporphyrinogen-III oxidase (305 aa).

S98 provides a ligand contact to substrate. Residues H102 and H112 each contribute to the a divalent metal cation site. H112 functions as the Proton donor in the catalytic mechanism. 114–116 (NVR) contacts substrate. A divalent metal cation is bound by residues H151 and H181. Positions 246-281 (YVEFNLVYDRGTLFGLQSGGRTESILMSMPPLARWE) are important for dimerization. 264-266 (GGR) contributes to the substrate binding site.

Belongs to the aerobic coproporphyrinogen-III oxidase family. Homodimer. Requires a divalent metal cation as cofactor.

It is found in the cytoplasm. The enzyme catalyses coproporphyrinogen III + O2 + 2 H(+) = protoporphyrinogen IX + 2 CO2 + 2 H2O. The protein operates within porphyrin-containing compound metabolism; protoporphyrin-IX biosynthesis; protoporphyrinogen-IX from coproporphyrinogen-III (O2 route): step 1/1. In terms of biological role, involved in the heme biosynthesis. Catalyzes the aerobic oxidative decarboxylation of propionate groups of rings A and B of coproporphyrinogen-III to yield the vinyl groups in protoporphyrinogen-IX. The protein is Oxygen-dependent coproporphyrinogen-III oxidase of Vibrio parahaemolyticus serotype O3:K6 (strain RIMD 2210633).